A 229-amino-acid chain; its full sequence is Uracil-DNA glycosylase (229 aa).

D65 (proton acceptor) is an active-site residue.

The protein belongs to the uracil-DNA glycosylase (UDG) superfamily. UNG family.

It localises to the cytoplasm. The enzyme catalyses Hydrolyzes single-stranded DNA or mismatched double-stranded DNA and polynucleotides, releasing free uracil.. In terms of biological role, excises uracil residues from the DNA which can arise as a result of misincorporation of dUMP residues by DNA polymerase or due to deamination of cytosine. The sequence is that of Uracil-DNA glycosylase from Oceanobacillus iheyensis (strain DSM 14371 / CIP 107618 / JCM 11309 / KCTC 3954 / HTE831).